Here is a 398-residue protein sequence, read N- to C-terminus: UPF0261 protein RA0729 (398 aa).

The protein belongs to the UPF0261 family.

This Rhizobium meliloti (strain 1021) (Ensifer meliloti) protein is UPF0261 protein RA0729.